The following is a 536-amino-acid chain: MYIMKLLIKEALEDALLKLNISRKVILTDAKDFGDFSSNIAMVLQKDLGKNPLEIAQMIVEKINKEKFLIEKIEIVKPGFINFFLDHKFYVYLLEKFSKNDFLIELEKTYTYNLEYVSANPTGFLHIGHARGAAIGDTLANILEFANNKVIREYYVNDAGNQISILAYALYIRYQQILGNKTLNLPEDSYHGEDIKYFAKIFHKKYQEKFKNVDYSLEVENFFKDEGVKIALEKIKLDLKTFRVEFDLYTSEKSIYPLIEKSLKKLKNTYEQDGALWLKTTDYGDDKDRVLIKNDGTYTYFAPDLAYHYVKKTRSENVDYLIDFFGADHIGYVKRMQIALEQFGFSKDTLNVLILEMVKLRKNGTEFVMSKRKGTAISLEDLIELIGVDNARFFLVDHSSSSKLDLEIDLIAEKNLSNGAFIIQYAYARTNSILEKTKVTLDVKLIRKPFDDKFEMKLVNVLKEFPILIEKIAENFKIHLLSQYLITLAKSFNSFYSNSKIIDSEEELKLILLVKATQAVLKKGLDLLKVEAPERI.

Residues 119-129 carry the 'HIGH' region motif; sequence ANPTGFLHIGH.

Belongs to the class-I aminoacyl-tRNA synthetase family. Monomer.

Its subcellular location is the cytoplasm. The catalysed reaction is tRNA(Arg) + L-arginine + ATP = L-arginyl-tRNA(Arg) + AMP + diphosphate. In Mycoplasma mobile (strain ATCC 43663 / 163K / NCTC 11711) (Mesomycoplasma mobile), this protein is Arginine--tRNA ligase.